Here is a 157-residue protein sequence, read N- to C-terminus: Protein Smg homolog (157 aa).

Belongs to the Smg family.

The polypeptide is Protein Smg homolog (Shewanella frigidimarina (strain NCIMB 400)).